Here is a 413-residue protein sequence, read N- to C-terminus: Phosphopentomutase (413 aa).

6 residues coordinate Mn(2+): Asp11, Asp306, His311, Asp347, His348, and His359.

The protein belongs to the phosphopentomutase family. It depends on Mn(2+) as a cofactor.

The protein localises to the cytoplasm. The enzyme catalyses 2-deoxy-alpha-D-ribose 1-phosphate = 2-deoxy-D-ribose 5-phosphate. It carries out the reaction alpha-D-ribose 1-phosphate = D-ribose 5-phosphate. It functions in the pathway carbohydrate degradation; 2-deoxy-D-ribose 1-phosphate degradation; D-glyceraldehyde 3-phosphate and acetaldehyde from 2-deoxy-alpha-D-ribose 1-phosphate: step 1/2. In terms of biological role, isomerase that catalyzes the conversion of deoxy-ribose 1-phosphate (dRib-1-P) and ribose 1-phosphate (Rib-1-P) to deoxy-ribose 5-phosphate (dRib-5-P) and ribose 5-phosphate (Rib-5-P), respectively. The chain is Phosphopentomutase from Helicobacter pylori (strain J99 / ATCC 700824) (Campylobacter pylori J99).